An 82-amino-acid chain; its full sequence is UPF0437 protein in nifX-nifW intergenic region (82 aa).

Belongs to the UPF0437 family.

The protein is UPF0437 protein in nifX-nifW intergenic region of Frankia alni.